The sequence spans 87 residues: Toxin Cll5c (87 aa).

The signal sequence occupies residues 1–19 (MNSLLMITACLVLFGTVWA). Residues 20 to 85 (KEGYLVNKST…TYPLPNKSCS (66 aa)) form the LCN-type CS-alpha/beta domain. Disulfide bonds link C31/C84, C35/C60, C44/C65, and C48/C67. Positions 86–87 (KK) are cleaved as a propeptide — removed by a carboxypeptidase.

This sequence belongs to the long (4 C-C) scorpion toxin superfamily. Sodium channel inhibitor family. Beta subfamily. Expressed by the venom gland.

Its subcellular location is the secreted. In terms of biological role, beta toxins bind voltage-independently at site-4 of sodium channels (Nav) and shift the voltage of activation toward more negative potentials thereby affecting sodium channel activation and promoting spontaneous and repetitive firing. This is Toxin Cll5c from Centruroides limpidus (Mexican scorpion).